A 327-amino-acid chain; its full sequence is MRVIFAGTPEFARVALERLLAAGFTVPLVLTQPDRPAGRGMKLQASPVKQCALEHGIAVAQPRSLRLDGKYPEEAAAARAAIEAAQADVMVVAAYGLILPQWVLDTPPRGCLNIHASLLPRWRGAAPIHRAIEAGDAETGVTIMQMDAGLDTGDMCLVERLPITADDTTASLHDKLADLGGRLIVEALEMSACGGLPRTPQPAEGVNYAHKIEKAESQIDWRQDAEAIARRLRAFNPFPGGATQYGDESIKVWEAHADPAIAVGTAAPGTVLSAGADGVRVACGNGVLCMTLLQRAGGKRLAAGDFLRGFDLPEGAVLDGAASGGTP.

117-120 (SLLP) is a (6S)-5,6,7,8-tetrahydrofolate binding site.

The protein belongs to the Fmt family.

It carries out the reaction L-methionyl-tRNA(fMet) + (6R)-10-formyltetrahydrofolate = N-formyl-L-methionyl-tRNA(fMet) + (6S)-5,6,7,8-tetrahydrofolate + H(+). In terms of biological role, attaches a formyl group to the free amino group of methionyl-tRNA(fMet). The formyl group appears to play a dual role in the initiator identity of N-formylmethionyl-tRNA by promoting its recognition by IF2 and preventing the misappropriation of this tRNA by the elongation apparatus. In Delftia acidovorans (strain DSM 14801 / SPH-1), this protein is Methionyl-tRNA formyltransferase.